The sequence spans 860 residues: DNA mismatch repair protein MutS (860 aa).

Residue 621 to 628 (GPNMGGKS) participates in ATP binding.

The protein belongs to the DNA mismatch repair MutS family.

Functionally, this protein is involved in the repair of mismatches in DNA. It is possible that it carries out the mismatch recognition step. This protein has a weak ATPase activity. The protein is DNA mismatch repair protein MutS of Salmonella arizonae (strain ATCC BAA-731 / CDC346-86 / RSK2980).